The following is a 231-amino-acid chain: MTDRKEHKMKPGRRPTEGMTPSQERIMQVIRNAIDRDGLPPTVKEIAEALGMKTPSAHEQVQKLVKKGFIRRTPRKARSIEIVEQSPEEEPVEKKPDVARLVPVPIIGEVAAGIPILAVENHIGELLMDSRTARGPCFALKVKGDSMIDAEIFEGDYVVVRHQALAENGDIVVAILDGEATVKRLYISEETIELRPENRSYQPIVVPPGGDIRILGKVLAVRGHGAANNNE.

Residues 1–24 (MTDRKEHKMKPGRRPTEGMTPSQE) are disordered. Positions 43–62 (VKEIAEALGMKTPSAHEQVQ) form a DNA-binding region, H-T-H motif. Residues Ser146 and Lys183 each act as for autocatalytic cleavage activity in the active site.

This sequence belongs to the peptidase S24 family. Homodimer.

The enzyme catalyses Hydrolysis of Ala-|-Gly bond in repressor LexA.. Functionally, represses a number of genes involved in the response to DNA damage (SOS response), including recA and lexA. In the presence of single-stranded DNA, RecA interacts with LexA causing an autocatalytic cleavage which disrupts the DNA-binding part of LexA, leading to derepression of the SOS regulon and eventually DNA repair. The sequence is that of LexA repressor from Magnetococcus marinus (strain ATCC BAA-1437 / JCM 17883 / MC-1).